The sequence spans 392 residues: Flavohemoprotein (392 aa).

One can recognise a Globin domain in the interval 1–139 (MLNAEQRAII…LADILIGAEE (139 aa)). Residue His85 participates in heme b binding. Active-site charge relay system residues include Tyr95 and Glu138. The reductase stretch occupies residues 150–392 (GGWRGTREFR…EFFGPAAALE (243 aa)). Residues 153-256 (RGTREFRLVR…FPPAGDFTLA (104 aa)) form the FAD-binding FR-type domain. FAD-binding positions include Tyr191 and 205–208 (RNYS). An NADP(+)-binding site is contributed by 268 to 273 (GVGITP). Position 384–387 (384–387 (FFGP)) interacts with FAD.

Belongs to the globin family. Two-domain flavohemoproteins subfamily. The protein in the C-terminal section; belongs to the flavoprotein pyridine nucleotide cytochrome reductase family. It depends on heme b as a cofactor. The cofactor is FAD.

It catalyses the reaction 2 nitric oxide + NADPH + 2 O2 = 2 nitrate + NADP(+) + H(+). It carries out the reaction 2 nitric oxide + NADH + 2 O2 = 2 nitrate + NAD(+) + H(+). In terms of biological role, is involved in NO detoxification in an aerobic process, termed nitric oxide dioxygenase (NOD) reaction that utilizes O(2) and NAD(P)H to convert NO to nitrate, which protects the bacterium from various noxious nitrogen compounds. Therefore, plays a central role in the inducible response to nitrosative stress. This Pseudomonas putida (strain ATCC 47054 / DSM 6125 / CFBP 8728 / NCIMB 11950 / KT2440) protein is Flavohemoprotein.